The primary structure comprises 181 residues: Adenine phosphoribosyltransferase (181 aa).

It belongs to the purine/pyrimidine phosphoribosyltransferase family. Homodimer.

It localises to the cytoplasm. It carries out the reaction AMP + diphosphate = 5-phospho-alpha-D-ribose 1-diphosphate + adenine. It participates in purine metabolism; AMP biosynthesis via salvage pathway; AMP from adenine: step 1/1. In terms of biological role, catalyzes a salvage reaction resulting in the formation of AMP, that is energically less costly than de novo synthesis. The protein is Adenine phosphoribosyltransferase of Colwellia psychrerythraea (strain 34H / ATCC BAA-681) (Vibrio psychroerythus).